The primary structure comprises 174 residues: uncharacterized protein (174 aa).

This sequence belongs to the NAD(P)H dehydrogenase (quinone) family.

This is an uncharacterized protein from Bacillus subtilis (strain 168).